Here is a 426-residue protein sequence, read N- to C-terminus: Endoglucanase (426 aa).

An N-terminal signal peptide occupies residues 1 to 19 (MRRCMPLVAASVAALMLAG). Cys20 is lipidated: N-palmitoyl cysteine. Residue Cys20 is the site of S-diacylglycerol cysteine attachment. Positions 20-45 (CGGGDGDPSLSTASVSATDTTTLKPA) are excised as a propeptide. Catalysis depends on Glu249, which acts as the Proton donor. Glu361 serves as the catalytic Nucleophile.

It belongs to the glycosyl hydrolase 5 (cellulase A) family.

Its subcellular location is the cell membrane. The catalysed reaction is Endohydrolysis of (1-&gt;4)-beta-D-glucosidic linkages in cellulose, lichenin and cereal beta-D-glucans.. The protein is Endoglucanase (egl) of Ralstonia solanacearum (Pseudomonas solanacearum).